The following is a 376-amino-acid chain: 5-amino-6-(D-ribitylamino)uracil--L-tyrosine 4-hydroxyphenyl transferase 1 (376 aa).

The region spanning 50–284 (VTYVVNRNIN…AISRILLHGH (235 aa)) is the Radical SAM core domain. [4Fe-4S] cluster-binding residues include Cys64, Cys68, and Cys71.

Belongs to the radical SAM superfamily. CofH family. Consists of two subunits, CofG and CofH. [4Fe-4S] cluster is required as a cofactor.

The catalysed reaction is 5-amino-6-(D-ribitylamino)uracil + L-tyrosine + S-adenosyl-L-methionine = 5-amino-5-(4-hydroxybenzyl)-6-(D-ribitylimino)-5,6-dihydrouracil + 2-iminoacetate + 5'-deoxyadenosine + L-methionine + H(+). It functions in the pathway cofactor biosynthesis; coenzyme F0 biosynthesis. In terms of biological role, catalyzes the radical-mediated synthesis of 5-amino-5-(4-hydroxybenzyl)-6-(D-ribitylimino)-5,6-dihydrouracil from 5-amino-6-(D-ribitylamino)uracil and L-tyrosine. This chain is 5-amino-6-(D-ribitylamino)uracil--L-tyrosine 4-hydroxyphenyl transferase 1, found in Methanosarcina barkeri (strain Fusaro / DSM 804).